Here is a 307-residue protein sequence, read N- to C-terminus: UPF0276 protein PM0211 (307 aa).

The protein belongs to the UPF0276 family.

The polypeptide is UPF0276 protein PM0211 (Pasteurella multocida (strain Pm70)).